The sequence spans 421 residues: Histidine--tRNA ligase (421 aa).

It belongs to the class-II aminoacyl-tRNA synthetase family. In terms of assembly, homodimer.

Its subcellular location is the cytoplasm. The enzyme catalyses tRNA(His) + L-histidine + ATP = L-histidyl-tRNA(His) + AMP + diphosphate + H(+). This is Histidine--tRNA ligase from Francisella tularensis subsp. holarctica (strain LVS).